Here is a 189-residue protein sequence, read N- to C-terminus: UPF0301 protein PSEEN5058 (189 aa).

It belongs to the UPF0301 (AlgH) family.

The protein is UPF0301 protein PSEEN5058 of Pseudomonas entomophila (strain L48).